A 162-amino-acid chain; its full sequence is Transcription elongation factor GreA (162 aa).

The stretch at 45–74 (ENAEYEAAREKQAFIEGRIKELEDMTARAE) forms a coiled coil.

It belongs to the GreA/GreB family.

Functionally, necessary for efficient RNA polymerase transcription elongation past template-encoded arresting sites. The arresting sites in DNA have the property of trapping a certain fraction of elongating RNA polymerases that pass through, resulting in locked ternary complexes. Cleavage of the nascent transcript by cleavage factors such as GreA or GreB allows the resumption of elongation from the new 3'terminus. GreA releases sequences of 2 to 3 nucleotides. This Rickettsia prowazekii (strain Madrid E) protein is Transcription elongation factor GreA.